A 153-amino-acid chain; its full sequence is UPF0756 membrane protein lwe1581 (153 aa).

A run of 4 helical transmembrane segments spans residues 6-26 (MLFLLLFLLLGLIAKNNSLII), 54-74 (WGVTIITVAILIPIATGQIGF), 80-100 (SFKSAAGWIGLGAGIAVSILA), and 117-137 (LVFGTILAVVLFRGIAAGPVI).

The protein belongs to the UPF0756 family.

The protein resides in the cell membrane. This Listeria welshimeri serovar 6b (strain ATCC 35897 / DSM 20650 / CCUG 15529 / CIP 8149 / NCTC 11857 / SLCC 5334 / V8) protein is UPF0756 membrane protein lwe1581.